A 596-amino-acid chain; its full sequence is Inactive metallocarboxypeptidase ECM14 (596 aa).

A signal peptide spans 1–22; it reads MHFSVRLSLFLTLASSLPLVSA. Positions 23–184 are excised as a propeptide; the sequence is VPQHEDQAYT…QTIYESYPKA (162 aa). A disordered region spans residues 182-211; the sequence is PKAGSASPSQQGPTTRRFSPSASTSKSKPH. A compositionally biased stretch (polar residues) spans 187–207; that stretch reads ASPSQQGPTTRRFSPSASTSK. Residues 220–546 form the Peptidase M14 domain; the sequence is DYQPLSVLLP…RAMVAMGKFL (327 aa). Zn(2+) contacts are provided by His285 and Glu288. Substrate contacts are provided by residues 285–288, Arg343, and 360–361; these read HARE and DH. A disulfide bridge connects residues Cys354 and Cys377. The N-linked (GlcNAc...) asparagine glycan is linked to Asn370. His417 is a Zn(2+) binding site. 418–419 lines the substrate pocket; it reads SY. Residues 557–596 are disordered; that stretch reads DGLRASEEPQDYDNDLEDGEDDKDEQGSTVFRAQADDLQS. Residues 564–580 show a composition bias toward acidic residues; sequence EPQDYDNDLEDGEDDKD. Over residues 583-596 the composition is skewed to polar residues; that stretch reads GSTVFRAQADDLQS.

This sequence belongs to the peptidase M14 family. Zn(2+) serves as cofactor.

It is found in the vacuole. Its subcellular location is the secreted. Inactive carboxypeptidase that may play a role in cell wall organization and biogenesis. This chain is Inactive metallocarboxypeptidase ECM14 (ECM14), found in Arthroderma benhamiae (strain ATCC MYA-4681 / CBS 112371) (Trichophyton mentagrophytes).